The chain runs to 289 residues: Phosphatidylserine decarboxylase proenzyme (289 aa).

Catalysis depends on charge relay system; for autoendoproteolytic cleavage activity residues aspartate 89, histidine 146, and serine 252. Residue serine 252 is the Schiff-base intermediate with substrate; via pyruvic acid; for decarboxylase activity of the active site. A Pyruvic acid (Ser); by autocatalysis modification is found at serine 252.

This sequence belongs to the phosphatidylserine decarboxylase family. PSD-B subfamily. Prokaryotic type I sub-subfamily. As to quaternary structure, heterodimer of a large membrane-associated beta subunit and a small pyruvoyl-containing alpha subunit. Pyruvate is required as a cofactor. In terms of processing, is synthesized initially as an inactive proenzyme. Formation of the active enzyme involves a self-maturation process in which the active site pyruvoyl group is generated from an internal serine residue via an autocatalytic post-translational modification. Two non-identical subunits are generated from the proenzyme in this reaction, and the pyruvate is formed at the N-terminus of the alpha chain, which is derived from the carboxyl end of the proenzyme. The autoendoproteolytic cleavage occurs by a canonical serine protease mechanism, in which the side chain hydroxyl group of the serine supplies its oxygen atom to form the C-terminus of the beta chain, while the remainder of the serine residue undergoes an oxidative deamination to produce ammonia and the pyruvoyl prosthetic group on the alpha chain. During this reaction, the Ser that is part of the protease active site of the proenzyme becomes the pyruvoyl prosthetic group, which constitutes an essential element of the active site of the mature decarboxylase.

It is found in the cell membrane. It catalyses the reaction a 1,2-diacyl-sn-glycero-3-phospho-L-serine + H(+) = a 1,2-diacyl-sn-glycero-3-phosphoethanolamine + CO2. Its pathway is phospholipid metabolism; phosphatidylethanolamine biosynthesis; phosphatidylethanolamine from CDP-diacylglycerol: step 2/2. Catalyzes the formation of phosphatidylethanolamine (PtdEtn) from phosphatidylserine (PtdSer). The chain is Phosphatidylserine decarboxylase proenzyme from Shewanella putrefaciens (strain CN-32 / ATCC BAA-453).